A 159-amino-acid chain; its full sequence is NADH-quinone oxidoreductase subunit I (159 aa).

4Fe-4S ferredoxin-type domains follow at residues 51 to 80 and 90 to 119; these read RRYENGVERCIACKLCEAICPAQAIVIEAE and TRYDIDMTKCIYCGLCQEACPVDAIVEGPN. Cysteine 60, cysteine 63, cysteine 66, cysteine 70, cysteine 99, cysteine 102, cysteine 105, and cysteine 109 together coordinate [4Fe-4S] cluster.

It belongs to the complex I 23 kDa subunit family. In terms of assembly, NDH-1 is composed of 14 different subunits. Subunits NuoA, H, J, K, L, M, N constitute the membrane sector of the complex. It depends on [4Fe-4S] cluster as a cofactor.

It is found in the cell inner membrane. The catalysed reaction is a quinone + NADH + 5 H(+)(in) = a quinol + NAD(+) + 4 H(+)(out). NDH-1 shuttles electrons from NADH, via FMN and iron-sulfur (Fe-S) centers, to quinones in the respiratory chain. The immediate electron acceptor for the enzyme in this species is believed to be ubiquinone. Couples the redox reaction to proton translocation (for every two electrons transferred, four hydrogen ions are translocated across the cytoplasmic membrane), and thus conserves the redox energy in a proton gradient. This Rickettsia canadensis (strain McKiel) protein is NADH-quinone oxidoreductase subunit I.